A 921-amino-acid polypeptide reads, in one-letter code: Phototropin-1A (921 aa).

The segment covering 1 to 11 has biased composition (gly residues); sequence MASKGTEGGHG. 2 disordered regions span residues 1-59 and 88-118; these read MASK…SPFL and TGLP…QSAA. Residues 40–51 are compositionally biased toward low complexity; sequence SSASSFRTAAAA. Residues 97–117 show a composition bias toward polar residues; the sequence is RPSSGSARTSSEDNPQQQQSA. A PAS 1 domain is found at 123–197; the sequence is VSEELRAALS…KIRQSLANGS (75 aa). FMN is bound by residues 172-177, Arg190, Asn205, Asn215, and Gln236; that span reads NCRFLQ. Position 173 is an S-4a-FMN cysteine (Cys173). Residues 197–251 form the PAC 1 domain; the sequence is SNYCGRILNYKKDGTPFWNLLTIAPIKDEDGRLLKFIGMQVEVSKYTEGKKDTVV. The segment covering 286–295 has biased composition (polar residues); sequence RSLSESSNNT. Disordered stretches follow at residues 286-347 and 364-390; these read RSLS…NRTR and SVEK…ESFE. Basic and acidic residues-rich tracts occupy residues 312 to 321 and 364 to 376; these read PSKRSSESGS and SVEK…RDED. The region spanning 400-473 is the PAS 2 domain; that stretch reads RGIDLATTLE…RKIRDAIDNQ (74 aa). Residues 449 to 454, Arg467, Asn482, Asn492, and Gln513 contribute to the FMN site; that span reads NCRFLQ. The residue at position 450 (Cys450) is an S-4a-FMN cysteine. A PAC 2 domain is found at 474–528; the sequence is AEVTVQLINYTKSGKKFWNLFHLQPMRDQKGDVQYFIGVQLDGTEHVQDDAAKEG. The Protein kinase domain maps to 594–881; the sequence is FRPVKPLGSG…ANEIKGHPFF (288 aa). ATP contacts are provided by residues 600-608 and Lys623; that span reads LGSGDTGSV. Asp719 functions as the Proton acceptor in the catalytic mechanism.

This sequence belongs to the protein kinase superfamily. Ser/Thr protein kinase family. Homodimer. Requires FMN as cofactor. Post-translationally, autophosphorylated in response to blue light irradiation. 2 molecules of FMN bind covalently to cysteines after exposure to blue light and are reversed in the dark. In terms of tissue distribution, highly expressed in coleoptiles of dark-grown seedlings.

The enzyme catalyses L-seryl-[protein] + ATP = O-phospho-L-seryl-[protein] + ADP + H(+). It catalyses the reaction L-threonyl-[protein] + ATP = O-phospho-L-threonyl-[protein] + ADP + H(+). Functionally, protein kinase that acts as a blue light photoreceptor in a signal-transduction pathway for phototropic responses. Regulates a wide range of physiological activities in plants that maximize the efficiency of photosynthesis, such as chloroplast relocations, stomata opening, and leaf expansion. The chain is Phototropin-1A (PHOT1A) from Oryza sativa subsp. japonica (Rice).